Consider the following 311-residue polypeptide: L-lactate dehydrogenase (311 aa).

Residues V12, D33, K38, Y63, and 77 to 78 (GA) contribute to the NAD(+) site. Substrate-binding positions include Q80, R86, and 118–121 (NPVD). NAD(+) is bound by residues 116–118 (VTN) and S141. 146-149 (DSAR) is a binding site for substrate. The beta-D-fructose 1,6-bisphosphate site is built by R151 and H166. Catalysis depends on H173, which acts as the Proton acceptor. At Y219 the chain carries Phosphotyrosine. T228 is a binding site for substrate.

It belongs to the LDH/MDH superfamily. LDH family. Homotetramer.

It is found in the cytoplasm. It carries out the reaction (S)-lactate + NAD(+) = pyruvate + NADH + H(+). It functions in the pathway fermentation; pyruvate fermentation to lactate; (S)-lactate from pyruvate: step 1/1. Its activity is regulated as follows. Allosterically activated by fructose 1,6-bisphosphate (FBP). Functionally, catalyzes the conversion of lactate to pyruvate. This Thermoanaerobacter pseudethanolicus (strain ATCC 33223 / 39E) (Clostridium thermohydrosulfuricum) protein is L-lactate dehydrogenase.